A 381-amino-acid polypeptide reads, in one-letter code: Prostatic acid phosphatase (381 aa).

Positions 1-31 (MRAVPLHLVGTASLTLGFLLLLSLRLDPGQA) are cleaved as a signal peptide. Residue R42 participates in substrate binding. The active-site Nucleophile is the H43. R46 provides a ligand contact to substrate. N-linked (GlcNAc...) asparagine glycosylation occurs at N93. Position 110 (R110) interacts with substrate. 3 disulfides stabilise this stretch: C160/C371, C214/C312, and C346/C350. N219 carries N-linked (GlcNAc...) asparagine glycosylation. Substrate is bound at residue H288. D289 (proton donor) is an active-site residue. N-linked (GlcNAc...) asparagine glycosylation occurs at N332.

This sequence belongs to the histidine acid phosphatase family. As to quaternary structure, homodimer; dimer formation is required for phosphatase activity. Post-translationally, N-glycosylated. Expressed in prostate epithelium. Also expressed in the pelvic nerve and sacral spinal cord. Localizes in peptidergic and non-peptidergic nociceptive (pain-sensing) neurons.

The protein localises to the secreted. The protein resides in the cell membrane. It localises to the lysosome membrane. It catalyses the reaction a phosphate monoester + H2O = an alcohol + phosphate. The enzyme catalyses a ribonucleoside 5'-phosphate + H2O = a ribonucleoside + phosphate. It carries out the reaction 1-(9Z-octadecenoyl)-sn-glycero-3-phosphate + H2O = 1-(9Z-octadecenoyl)-sn-glycerol + phosphate. The catalysed reaction is O-phospho-L-tyrosyl-[protein] + H2O = L-tyrosyl-[protein] + phosphate. With respect to regulation, inhibited by L(+)-tartrate. In terms of biological role, a non-specific tyrosine phosphatase that dephosphorylates a diverse number of substrates under acidic conditions (pH 4-6) including alkyl, aryl, and acyl orthophosphate monoesters and phosphorylated proteins. Has lipid phosphatase activity and inactivates lysophosphatidic acid in seminal plasma. Functionally, in addition to its tyrosine phosphatase activity, also has ecto-5'-nucleotidase activity in dorsal root ganglion (DRG) neurons. Generates adenosine from AMP. This extracellular adenosine leads to a decrease in chronic pain by activating A1R in nociceptive neurons. This Rattus norvegicus (Rat) protein is Prostatic acid phosphatase (Acp3).